A 621-amino-acid chain; its full sequence is Leucine aminopeptidase (621 aa).

Residues 1-73 (MPLLRSSQHI…ISNRKEFRKM (73 aa)) constitute a propeptide that is removed on maturation. The disordered stretch occupies residues 129-152 (SSSGGSGGNGGSAGSSGNGEGGAQ). Over residues 132-150 (GGSGGNGGSAGSSGNGEGG) the composition is skewed to gly residues. A peptide-binding residues include lysine 390, aspartate 395, and lysine 402. Zn(2+)-binding residues include lysine 390 and aspartate 395. The segment at 400-417 (NLKAAPGSMIDLMKFDMS) is L13 loop. The active site involves lysine 402. Positions 410, 412, 415, 475, and 477 each coordinate Zn(2+). Positions 415 and 475 each coordinate a peptide. Arginine 479 is an active-site residue.

This sequence belongs to the peptidase M17 family. In terms of assembly, homohexamer composed of dimer of trimers. Both the identity and concentration of metal ions available dictate the extent to which oligomerization occurs; Mn(2+) and Co(2+) induces oligomerization, whereas Mg(2+) has no effect, and Zn(2+) causes irreversible protein aggregation in vitro. Zn(2+) serves as cofactor.

It is found in the cytoplasm. It catalyses the reaction Release of an N-terminal amino acid, Xaa-|-Yaa-, in which Xaa is preferably Leu, but may be other amino acids including Pro although not Arg or Lys, and Yaa may be Pro. Amino acid amides and methyl esters are also readily hydrolyzed, but rates on arylamides are exceedingly low.. The catalysed reaction is L-cysteinylglycine + H2O = L-cysteine + glycine. With respect to regulation, oligomerization is required for catalytic activity and is metal-dependent. The type of metal that binds the 2 metal binding sites influences catalytic activity and substrate specificity. In vitro, activated by Co(2+), Mn(2+), Ni(2+), Mg(2+) and Zn(2+) with decreasing strength. Occupancy of the site 2 is essential and sufficient for activating the enzyme but occupation of the 2 sites is necessary for full catalytic activity. Inhibited by Ca(2+). Inhibited by fungal metabolite bestatin. In terms of biological role, aminopeptidase which preferentially cleaves leucine residues from the N-terminus of peptides. Also, has some activity towards tryptophan and methionine and has very low activity towards alanine, arginine, asparagine, phenylalanine and tyrosine. No activity towards histidine, serine, valine, isoleucine, glycine, aspartic acid and glutamic acid. In addition, cleaves the Cys-Gly dipeptide, probably as part of the glutathione regulation pathway; cleavage only occurs in the presence of Mn(2+). Plays a role in the final step of host hemoglobin catabolism, by cleaving hemoglobin-derived oligopeptides providing a source of amino acids for the parasite protein synthesis and for the maintenance of osmotic homeostasis. This is Leucine aminopeptidase from Plasmodium vivax (strain Salvador I).